The sequence spans 356 residues: Phenylalanine dehydrogenase (356 aa).

Residue arginine 43 coordinates NAD(+). Lysine 67 is an L-phenylalanine binding site. The active-site Proton donor/acceptor is lysine 79. 118 to 119 is a binding site for L-phenylalanine; the sequence is PD. NAD(+) contacts are provided by residues aspartate 119, serine 150, threonine 154, 183–189, 206–207, arginine 211, 240–241, and 261–263; these read GLGAVGG, DT, AM, and AAN. Position 263 (asparagine 263) interacts with L-phenylalanine.

Belongs to the Glu/Leu/Phe/Val dehydrogenases family. In terms of assembly, homotetramer, dimer of dimers.

It catalyses the reaction L-phenylalanine + NAD(+) + H2O = 3-phenylpyruvate + NH4(+) + NADH + H(+). It participates in amino-acid biosynthesis; L-phenylalanine biosynthesis; L-phenylalanine from phenylpyruvate (PDH route): step 1/1. Subject to competitive inhibition by 3-phenylpropionate for the conversion of L-phenylalanine to phenylpyruvate. Subject to competitive inhibition by D-phenylalanine for the conversion of phenylpyruvate to L-phenylalanine. Its function is as follows. Catalyzes the reversible NAD(+)-dependent oxidative deamination of L-phenylalanine to phenylpyruvate. The sequence is that of Phenylalanine dehydrogenase from Rhodococcus sp.